Reading from the N-terminus, the 212-residue chain is Large ribosomal subunit protein uL3 (212 aa).

Residues 140-155 (SVSHRAIGSTGQNQSP) show a composition bias toward polar residues. A disordered region spans residues 140 to 166 (SVSHRAIGSTGQNQSPGKVFKGKKMPG). The residue at position 153 (Gln153) is an N5-methylglutamine.

It belongs to the universal ribosomal protein uL3 family. As to quaternary structure, part of the 50S ribosomal subunit. Forms a cluster with proteins L14 and L19. Methylated by PrmB.

In terms of biological role, one of the primary rRNA binding proteins, it binds directly near the 3'-end of the 23S rRNA, where it nucleates assembly of the 50S subunit. The polypeptide is Large ribosomal subunit protein uL3 (Psychrobacter cryohalolentis (strain ATCC BAA-1226 / DSM 17306 / VKM B-2378 / K5)).